The chain runs to 884 residues: Valine--tRNA ligase (884 aa).

Positions 46 to 56 (PNVTGKLHLGH) match the 'HIGH' region motif. The 'KMSKS' region motif lies at 520-524 (KMSKS). ATP is bound at residue Lys523. Residues 809–844 (LADLLNVEEELARLEKELAKWQKELNMVGKKLSNER) are a coiled coil.

The protein belongs to the class-I aminoacyl-tRNA synthetase family. ValS type 1 subfamily. Monomer.

It is found in the cytoplasm. The enzyme catalyses tRNA(Val) + L-valine + ATP = L-valyl-tRNA(Val) + AMP + diphosphate. In terms of biological role, catalyzes the attachment of valine to tRNA(Val). As ValRS can inadvertently accommodate and process structurally similar amino acids such as threonine, to avoid such errors, it has a 'posttransfer' editing activity that hydrolyzes mischarged Thr-tRNA(Val) in a tRNA-dependent manner. This chain is Valine--tRNA ligase, found in Streptococcus agalactiae serotype III (strain NEM316).